Here is a 242-residue protein sequence, read N- to C-terminus: MKILIPTAKEMNTDLPSIEAIPLKPESQAVLDALALYSASQLESFYKVSAEKAAEEFQNIQALKRQTAQHYPALKLFDGLMYRNIKRDKLTEAEQDYLENHVFITSALYGVVPVLSPMAPHRLDFLMKLKVAGKTLKSHWKAAYDETLKKEEVIFSLLSSEFETVFSKEIRAKMVTLKFMEDRGGQLKIHSTISKKARGAFLTALIENQVQTVGEARRLNFAGFVYREDLSQPQGLVFVKEV.

It belongs to the UPF0246 family.

The sequence is that of UPF0246 protein SPP_1571 from Streptococcus pneumoniae (strain P1031).